The primary structure comprises 62 residues: Large ribosomal subunit protein eL24 (62 aa).

Residues Cys7, Cys10, Cys33, and Cys37 each coordinate Zn(2+). The C4-type zinc-finger motif lies at 7-37 (CSFCGREIEPGTGIMYVKNDGSILWFCSRKC).

Belongs to the eukaryotic ribosomal protein eL24 family. In terms of assembly, part of the 50S ribosomal subunit. Forms a cluster with proteins L3 and L14. Requires Zn(2+) as cofactor.

Binds to the 23S rRNA. This Staphylothermus marinus (strain ATCC 43588 / DSM 3639 / JCM 9404 / F1) protein is Large ribosomal subunit protein eL24.